The following is a 1009-amino-acid chain: Putative receptor-like protein 8 (1009 aa).

An N-terminal signal peptide occupies residues 1-22; the sequence is MKTNFVILLLLLCVFAISPSQQ. Residues 23–961 lie on the Extracellular side of the membrane; the sequence is EEINQHNPGI…EEDDEAPVDM (939 aa). Asn-159 and Asn-197 each carry an N-linked (GlcNAc...) asparagine glycan. An LRR 1; degenerate repeat occupies 204–231; it reads FEEVRSLELSAGLNGFVDNVEGYKSLRK. LRR repeat units follow at residues 232 to 255, 257 to 281, 282 to 305, 306 to 329, 331 to 354, 355 to 377, 379 to 402, 404 to 427, 442 to 465, 466 to 490, 492 to 514, 515 to 538, 540 to 565, 567 to 587, 588 to 612, 613 to 636, 638 to 660, 662 to 681, 682 to 705, 707 to 728, 729 to 752, 819 to 842, 843 to 866, 867 to 891, and 893 to 916; these read LKNL…PFIN, ATSL…EIKD, LTNL…LTHL, KKLK…VVCE, KNLW…LGRL, NKLR…TFNR, ESLE…PLAN, TKLK…SEPK, LEKI…ATIV, HELQ…GYAL, NLLR…MGEM, VNIT…FVTG, FSLK…SFTS, EELR…LLSS, NTTL…MSNL, SGLT…LLAI, FLSL…VGGE, GIKL…DTLL, EKVQ…VNTE, IYIL…LCDL, RNIR…LYNL, LDYM…ELGS, LSKL…SFSN, LKDI…LTNL, and SLVV…QFNT. N-linked (GlcNAc...) asparagine glycosylation occurs at Asn-267. Asn-390 and Asn-402 each carry an N-linked (GlcNAc...) asparagine glycan. Residues Asn-497, Asn-516, Asn-526, and Asn-551 are each glycosylated (N-linked (GlcNAc...) asparagine). N-linked (GlcNAc...) asparagine glycans are attached at residues Asn-588 and Asn-611. 2 N-linked (GlcNAc...) asparagine glycosylation sites follow: Asn-716 and Asn-751. Residues Asn-850, Asn-890, Asn-903, and Asn-934 are each glycosylated (N-linked (GlcNAc...) asparagine). The disordered stretch occupies residues 934–955; it reads NRSCDAKKTSDESENGGEEEDD. Over residues 945–955 the composition is skewed to acidic residues; that stretch reads ESENGGEEEDD. Residues 962-982 form a helical membrane-spanning segment; it reads LAFYFSSASTYVTTLIGIFIL. Residues 983–1009 are Cytoplasmic-facing; that stretch reads MCFDCPLRRAWLRIVDASIASVKSMLP.

The protein belongs to the RLP family.

It is found in the cell membrane. In Arabidopsis thaliana (Mouse-ear cress), this protein is Putative receptor-like protein 8.